The following is a 100-amino-acid chain: uncharacterized protein (100 aa).

It to M.jannaschii MJ1155.1.

This is an uncharacterized protein from Archaeoglobus fulgidus (strain ATCC 49558 / DSM 4304 / JCM 9628 / NBRC 100126 / VC-16).